Here is a 381-residue protein sequence, read N- to C-terminus: Succinyl-diaminopimelate desuccinylase (381 aa).

His72 lines the Zn(2+) pocket. The active site involves Asp74. Residue Asp103 coordinates Zn(2+). The active-site Proton acceptor is Glu133. Positions 134, 163, and 348 each coordinate Zn(2+).

It belongs to the peptidase M20A family. DapE subfamily. In terms of assembly, homodimer. It depends on Zn(2+) as a cofactor. Requires Co(2+) as cofactor.

It carries out the reaction N-succinyl-(2S,6S)-2,6-diaminopimelate + H2O = (2S,6S)-2,6-diaminopimelate + succinate. Its pathway is amino-acid biosynthesis; L-lysine biosynthesis via DAP pathway; LL-2,6-diaminopimelate from (S)-tetrahydrodipicolinate (succinylase route): step 3/3. Functionally, catalyzes the hydrolysis of N-succinyl-L,L-diaminopimelic acid (SDAP), forming succinate and LL-2,6-diaminopimelate (DAP), an intermediate involved in the bacterial biosynthesis of lysine and meso-diaminopimelic acid, an essential component of bacterial cell walls. This is Succinyl-diaminopimelate desuccinylase from Anaplasma marginale (strain Florida).